Consider the following 161-residue polypeptide: uncharacterized protein (161 aa).

The next 4 helical transmembrane spans lie at 22-42 (LFFI…VFGH), 43-63 (LTVG…ALLV), 89-109 (LAII…AGLG), and 110-130 (VVFG…LPVL). The segment at 141–161 (VATYSSNGQTGGSEGRSASDD) is disordered.

This sequence to M.leprae ML1138.

It is found in the cell membrane. This is an uncharacterized protein from Mycobacterium bovis (strain ATCC BAA-935 / AF2122/97).